A 134-amino-acid chain; its full sequence is Ribosome-binding factor A (134 aa).

Belongs to the RbfA family. In terms of assembly, monomer. Binds 30S ribosomal subunits, but not 50S ribosomal subunits or 70S ribosomes.

It is found in the cytoplasm. Its function is as follows. One of several proteins that assist in the late maturation steps of the functional core of the 30S ribosomal subunit. Associates with free 30S ribosomal subunits (but not with 30S subunits that are part of 70S ribosomes or polysomes). Required for efficient processing of 16S rRNA. May interact with the 5'-terminal helix region of 16S rRNA. This chain is Ribosome-binding factor A, found in Tolumonas auensis (strain DSM 9187 / NBRC 110442 / TA 4).